A 289-amino-acid polypeptide reads, in one-letter code: Nucleotide-binding protein MS1718 (289 aa).

Residue 8-15 (GRSGAGKS) coordinates ATP. 56 to 59 (DIRN) contributes to the GTP binding site.

It belongs to the RapZ-like family.

Its function is as follows. Displays ATPase and GTPase activities. In Mannheimia succiniciproducens (strain KCTC 0769BP / MBEL55E), this protein is Nucleotide-binding protein MS1718.